Reading from the N-terminus, the 1333-residue chain is MRNLKLLQTLEFKDIQAPGKPQCFSLRTEPGTVLIGSEHGLIEVDPVTREVKNEIPLVAEGFLPEDKSGCIVGIQDLLDQESVCIATASGDVILCNLSTHQLECVGSVASGISVMSWSPDQELVLLATGQQTLIMMTKDFEPIMEQQIHQDDFGESKFITVGWGKKETQFHGSEGRQAAFQIQTHESALPWDDHRPRVTWRGDGQFFAVSVVCPETGARKVRVWNREFALQSTSEPVPGLGPALAWKPSGSLIASTQNKPNQQDVVFFEKNGLLHGQFTLPFLKDEVKVNDLLWNADSSVLAVWLEDLQREEDSVLKTYVQLWTVGNYHWYLNECLPFSTYGKSKIVSLMWDPVIPYRLHVLCQGWHYLCYDWRWTTDRSSGDNESDLANVAVIDGNRILVTVFQQTVVPPPMCTYRLLLPHPVNQVTFCALPKKSNDLAVLDASNQISVYKCGDSPSMDPTVKLGAVGGNGFKVSLRTPHLEKRYKIQFESNEDQETNPLKLSLLSWIEEDIFLAICHSQCSPQQSVIHRLTVVPCEVDEEQGQLSVSSSISVDGIIISMCCNSKTKSVALQLADGQILKYIWESPSLAVEPWKNPGGFPIQFPYPCIQTELAMIGGEECVLGLTDRCRFFINDTEVASNITSFAVYDEFLLLTTHSHTCQCYCLKDASIKTLQAGLSSSHVSNGEILRKVERGSRIVTVVPQDTKLILQMPRGNLEVVHHRALVLAQIRKWLDKIMFKEAFECMRKLRINLNLIHDHNPEVFLQNVETFIRQIDCVNHINLFFTELKEEDVTKTMYPPPVPSSVQQSRDPGGTKLDLICDALRVAMENINPHKYCLPILTSHVKKTTPELEIVLQKVHELQGNAPSDPDAVSAEEALKYLLLLVDVNELYDHSLGTYDFDLVLMVAEKSQKDPKEYLPFLNTLKKMETNYQRFTIDKYLKRYEKAIGHLSKCGPEYFSECLNLIKDKNLYNEALKLYPPTSQEYKDISIAYGEHLMEEHQYEPAGLVFARCGAHEKALSAFLTCGSWQQTLCMAAQLNMTEEQLAGLGRTLAGKLAEQRKHSDAAIVLEQYTQDYEEAVLLLLEGAAWEEALRLVYKYNRLDIIETNIKPSILEAYKNYMAFLESQSATFSRHKERLLEVRELKERAQQVDLDDEMPHGQEADLFSETSSIVSGSEMSSKYSHSNSRISARSSKNRRKAERKKHSLKEGSPLEDLALLEALNEVVQSLDKLKDEVYRILKVLFLFEFDEQGRELQKTFQDTLQLVERSLPEIWTLTYQQNSAMPVLGPSSTANSIMASYQQQKTSVPVLDAELFVPPKINRKTQWKLSLLE.

Phosphoserine occurs at positions 805, 868, 1172, and 1175. A mediates dimerization region spans residues 886–1333; sequence VDVNELYDHS…KTQWKLSLLE (448 aa). The interval 1177 to 1209 is disordered; sequence SEMSSKYSHSNSRISARSSKNRRKAERKKHSLK. Residues 1192–1210 are required for binding to tRNA; the sequence is ARSSKNRRKAERKKHSLKE. Positions 1195–1207 are enriched in basic residues; that stretch reads SKNRRKAERKKHS.

This sequence belongs to the ELP1/IKA1 family. Homodimer; dimerization promotes ELP1 stability and elongator complex formation. Component of the elongator complex which consists of ELP1, ELP2, ELP3, ELP4, ELP5 and ELP6. Interacts preferentially with MAP3K14/NIK followed by IKK-alpha and IKK-beta. In terms of processing, phosphorylated.

It is found in the cytoplasm. It localises to the nucleus. Its pathway is tRNA modification; 5-methoxycarbonylmethyl-2-thiouridine-tRNA biosynthesis. Component of the elongator complex which is required for multiple tRNA modifications, including mcm5U (5-methoxycarbonylmethyl uridine), mcm5s2U (5-methoxycarbonylmethyl-2-thiouridine), and ncm5U (5-carbamoylmethyl uridine). The elongator complex catalyzes the formation of carboxymethyluridine in the wobble base at position 34 in tRNAs. Regulates the migration and branching of projection neurons in the developing cerebral cortex, through a process depending on alpha-tubulin acetylation. ELP1 binds to tRNA, mediating interaction of the elongator complex with tRNA. May act as a scaffold protein that assembles active IKK-MAP3K14 complexes (IKKA, IKKB and MAP3K14/NIK). The polypeptide is Elongator complex protein 1 (ELP1) (Oryctolagus cuniculus (Rabbit)).